The primary structure comprises 495 residues: UDP-N-acetylmuramoyl-L-alanyl-D-glutamate--2,6-diaminopimelate ligase (495 aa).

UDP-N-acetyl-alpha-D-muramoyl-L-alanyl-D-glutamate-binding positions include Leu27, Ser29, and His44–Thr46. Residue Gly116–Thr122 coordinates ATP. UDP-N-acetyl-alpha-D-muramoyl-L-alanyl-D-glutamate is bound by residues Asn157, Thr158–Thr159, Ser185, Gln191, and Arg193. Lys225 bears the N6-carboxylysine mark. Meso-2,6-diaminopimelate is bound by residues Arg390, Asp414 to Arg417, Gly465, and Glu469. The Meso-diaminopimelate recognition motif motif lies at Asp414–Arg417.

This sequence belongs to the MurCDEF family. MurE subfamily. Requires Mg(2+) as cofactor. In terms of processing, carboxylation is probably crucial for Mg(2+) binding and, consequently, for the gamma-phosphate positioning of ATP.

It is found in the cytoplasm. It carries out the reaction UDP-N-acetyl-alpha-D-muramoyl-L-alanyl-D-glutamate + meso-2,6-diaminopimelate + ATP = UDP-N-acetyl-alpha-D-muramoyl-L-alanyl-gamma-D-glutamyl-meso-2,6-diaminopimelate + ADP + phosphate + H(+). The protein operates within cell wall biogenesis; peptidoglycan biosynthesis. Functionally, catalyzes the addition of meso-diaminopimelic acid to the nucleotide precursor UDP-N-acetylmuramoyl-L-alanyl-D-glutamate (UMAG) in the biosynthesis of bacterial cell-wall peptidoglycan. In Sodalis glossinidius (strain morsitans), this protein is UDP-N-acetylmuramoyl-L-alanyl-D-glutamate--2,6-diaminopimelate ligase.